The sequence spans 218 residues: MKFFVDTADIKDIRELNDLGLLDGVTTNPSLILKSGGKIADVTKQICDIVQGPVSAEVVATEYKDMMAEAEVLAKIAPNVCIKVPLTLDGLKACKTIRTQMNRMVNVTLCFSANQALLAAKAGASFISPFVGRIDDTGSDGMELIQEIRQIYDNYDYQTEILTASVRTVNHVKQAALIGADVITAPPATLKALVNHPLTDKGLAAFLADWAKTGQKIG.

The active-site Schiff-base intermediate with substrate is the K83.

The protein belongs to the transaldolase family. Type 3B subfamily.

The protein resides in the cytoplasm. It carries out the reaction D-sedoheptulose 7-phosphate + D-glyceraldehyde 3-phosphate = D-erythrose 4-phosphate + beta-D-fructose 6-phosphate. The protein operates within carbohydrate degradation; pentose phosphate pathway; D-glyceraldehyde 3-phosphate and beta-D-fructose 6-phosphate from D-ribose 5-phosphate and D-xylulose 5-phosphate (non-oxidative stage): step 2/3. Functionally, transaldolase is important for the balance of metabolites in the pentose-phosphate pathway. The polypeptide is Probable transaldolase (tal) (Mesorhizobium japonicum (strain LMG 29417 / CECT 9101 / MAFF 303099) (Mesorhizobium loti (strain MAFF 303099))).